The chain runs to 154 residues: Methylglyoxal synthase (154 aa).

Residues 6–154 (SPLPANKAIA…AYMARRAQGN (149 aa)) enclose the MGS-like domain. Substrate-binding positions include H19, K23, 45-48 (TGTT), and 65-66 (SG). Residue D71 is the Proton donor/acceptor of the active site. Residue H98 participates in substrate binding.

Belongs to the methylglyoxal synthase family.

It catalyses the reaction dihydroxyacetone phosphate = methylglyoxal + phosphate. Its function is as follows. Catalyzes the formation of methylglyoxal from dihydroxyacetone phosphate. This is Methylglyoxal synthase from Cellvibrio japonicus (strain Ueda107) (Pseudomonas fluorescens subsp. cellulosa).